The chain runs to 94 residues: Cytochrome c-551 (94 aa).

Residues 1 to 14 (MAFTAMTVAPSALA) form the signal peptide. The heme c site is built by C24, C27, H28, and M73.

In terms of processing, binds 1 heme c group covalently per subunit.

In terms of biological role, efficiently couple electron transfer between the cytochrome bc1 complex and the photosynthetic reaction center. This chain is Cytochrome c-551, found in Allochromatium vinosum (strain ATCC 17899 / DSM 180 / NBRC 103801 / NCIMB 10441 / D) (Chromatium vinosum).